Reading from the N-terminus, the 211-residue chain is Agamous-like MADS-box protein AGL12 (211 aa).

The region spanning 3-57 is the MADS-box domain; the sequence is RGKIQLKRIENPVHRQVTFCKRRTGLLKKAKELSVLCDAEIGVVIFSPQGKLFEL. In terms of domain architecture, K-box spans 95–185; sequence NLDPKDEINV…LEKIEENNNS (91 aa).

In terms of tissue distribution, preferentially expressed in roots. In root meristem, expressed in external cells of columella, lateral root cap and atrichoblasts. In mature root, expressed in the central cylinder. Expressed in leaf vasculature, young floral meristems and nectaries.

It localises to the nucleus. Probable transcription activator that regulates root development by controlling cell proliferation in root meristem. May mediate responses to auxin in the root. May act as promoter of the flowering transition through up-regulation of SOC, FT and LFY. The chain is Agamous-like MADS-box protein AGL12 from Arabidopsis thaliana (Mouse-ear cress).